The sequence spans 474 residues: 6-phospho-beta-galactosidase (474 aa).

5 residues coordinate D-galactose 6-phosphate: Gln-18, His-115, Asn-159, Glu-160, and Asn-296. The active-site Proton donor is the Glu-160. Glu-374 acts as the Nucleophile in catalysis. Residues Ser-427, Trp-428, Lys-434, and Tyr-436 each contribute to the D-galactose 6-phosphate site.

This sequence belongs to the glycosyl hydrolase 1 family.

The enzyme catalyses a 6-phospho-beta-D-galactoside + H2O = D-galactose 6-phosphate + an alcohol. Its pathway is carbohydrate metabolism; lactose degradation; D-galactose 6-phosphate and beta-D-glucose from lactose 6-phosphate: step 1/1. The polypeptide is 6-phospho-beta-galactosidase (Clostridium acetobutylicum (strain ATCC 824 / DSM 792 / JCM 1419 / IAM 19013 / LMG 5710 / NBRC 13948 / NRRL B-527 / VKM B-1787 / 2291 / W)).